Consider the following 557-residue polypeptide: Trigger factor (557 aa).

The region spanning 169-255 (GDVVVIDFQA…LKEIKTKELP (87 aa)) is the PPIase FKBP-type domain. Residues 438-557 (WVDSEGNPTE…KAGKKSKKDK (120 aa)) form a disordered region. A compositionally biased stretch (basic and acidic residues) spans 455–466 (SEGEDRQERSES).

It belongs to the FKBP-type PPIase family. Tig subfamily.

The protein localises to the cytoplasm. It carries out the reaction [protein]-peptidylproline (omega=180) = [protein]-peptidylproline (omega=0). Functionally, involved in protein export. Acts as a chaperone by maintaining the newly synthesized protein in an open conformation. Functions as a peptidyl-prolyl cis-trans isomerase. The chain is Trigger factor from Synechococcus sp. (strain JA-3-3Ab) (Cyanobacteria bacterium Yellowstone A-Prime).